A 164-amino-acid polypeptide reads, in one-letter code: ATP synthase subunit b 2 (164 aa).

The chain crosses the membrane as a helical span at residues 4–24 (TFWAFVGLVLFLALLAYFKVP).

Belongs to the ATPase B chain family. F-type ATPases have 2 components, F(1) - the catalytic core - and F(0) - the membrane proton channel. F(1) has five subunits: alpha(3), beta(3), gamma(1), delta(1), epsilon(1). F(0) has three main subunits: a(1), b(2) and c(10-14). The alpha and beta chains form an alternating ring which encloses part of the gamma chain. F(1) is attached to F(0) by a central stalk formed by the gamma and epsilon chains, while a peripheral stalk is formed by the delta and b chains.

It localises to the cell inner membrane. In terms of biological role, f(1)F(0) ATP synthase produces ATP from ADP in the presence of a proton or sodium gradient. F-type ATPases consist of two structural domains, F(1) containing the extramembraneous catalytic core and F(0) containing the membrane proton channel, linked together by a central stalk and a peripheral stalk. During catalysis, ATP synthesis in the catalytic domain of F(1) is coupled via a rotary mechanism of the central stalk subunits to proton translocation. Functionally, component of the F(0) channel, it forms part of the peripheral stalk, linking F(1) to F(0). In Bartonella quintana (strain Toulouse) (Rochalimaea quintana), this protein is ATP synthase subunit b 2.